A 642-amino-acid polypeptide reads, in one-letter code: Threonine--tRNA ligase (642 aa).

Positions 1 to 61 (MPVITITNGL…MQDSKLDIIT (61 aa)) constitute a TGS domain. Residues 243–534 (DHRKIGQQLD…LIEEYAGFFP (292 aa)) are catalytic. Zn(2+)-binding residues include C334, H385, and H511.

Belongs to the class-II aminoacyl-tRNA synthetase family. In terms of assembly, homodimer. Requires Zn(2+) as cofactor.

The protein resides in the cytoplasm. The catalysed reaction is tRNA(Thr) + L-threonine + ATP = L-threonyl-tRNA(Thr) + AMP + diphosphate + H(+). Functionally, catalyzes the attachment of threonine to tRNA(Thr) in a two-step reaction: L-threonine is first activated by ATP to form Thr-AMP and then transferred to the acceptor end of tRNA(Thr). Also edits incorrectly charged L-seryl-tRNA(Thr). The sequence is that of Threonine--tRNA ligase from Baumannia cicadellinicola subsp. Homalodisca coagulata.